Reading from the N-terminus, the 143-residue chain is D-aminoacyl-tRNA deacylase (143 aa).

A Gly-cisPro motif, important for rejection of L-amino acids motif is present at residues 135-136 (GP).

The protein belongs to the DTD family. In terms of assembly, homodimer.

It is found in the cytoplasm. It carries out the reaction glycyl-tRNA(Ala) + H2O = tRNA(Ala) + glycine + H(+). It catalyses the reaction a D-aminoacyl-tRNA + H2O = a tRNA + a D-alpha-amino acid + H(+). Its function is as follows. An aminoacyl-tRNA editing enzyme that deacylates mischarged D-aminoacyl-tRNAs. Also deacylates mischarged glycyl-tRNA(Ala), protecting cells against glycine mischarging by AlaRS. Acts via tRNA-based rather than protein-based catalysis; rejects L-amino acids rather than detecting D-amino acids in the active site. By recycling D-aminoacyl-tRNA to D-amino acids and free tRNA molecules, this enzyme counteracts the toxicity associated with the formation of D-aminoacyl-tRNA entities in vivo and helps enforce protein L-homochirality. The polypeptide is D-aminoacyl-tRNA deacylase (Mycobacterium bovis (strain BCG / Pasteur 1173P2)).